The following is a 937-amino-acid chain: Protein translocase subunit SecA (937 aa).

ATP-binding positions include Q90, 108–112 (GEGKT), and D509.

Belongs to the SecA family. In terms of assembly, monomer and homodimer. Part of the essential Sec protein translocation apparatus which comprises SecA, SecYEG and auxiliary proteins SecDF. Other proteins may also be involved.

The protein resides in the cell inner membrane. Its subcellular location is the cellular thylakoid membrane. It localises to the cytoplasm. The catalysed reaction is ATP + H2O + cellular proteinSide 1 = ADP + phosphate + cellular proteinSide 2.. Its function is as follows. Part of the Sec protein translocase complex. Interacts with the SecYEG preprotein conducting channel. Has a central role in coupling the hydrolysis of ATP to the transfer of proteins into and across the cell membrane, serving as an ATP-driven molecular motor driving the stepwise translocation of polypeptide chains across the membrane. Functionally, probably participates in protein translocation into and across both the cytoplasmic and thylakoid membranes in cyanobacterial cells. The protein is Protein translocase subunit SecA of Parasynechococcus marenigrum (strain WH8102).